Here is a 461-residue protein sequence, read N- to C-terminus: uncharacterized protein (461 aa).

LRR repeat units follow at residues 119–140 (NVKK…EKMS), 141–162 (LLEV…QHCK), and 163–184 (NLKE…EYLK). The LRRCT domain occupies 197-237 (NPCVGEGGQEYRRKVIRVLPNLTKLDDKPVTTTDHQEAIED).

This is an uncharacterized protein from Caenorhabditis elegans.